The chain runs to 241 residues: Tetrahydromethanopterin S-methyltransferase subunit A (241 aa).

The Cytoplasmic segment spans residues 1–220; the sequence is MAEKKEPAEG…HSGVLAGKIE (220 aa). Histidine 85 contributes to the 5-hydroxybenzimidazolylcob(I)amide binding site. A helical transmembrane segment spans residues 221-241; the sequence is GIMVGLVLSLFVLGLLLFGGM.

The protein belongs to the MtrA family. The complex is composed of 8 subunits; MtrA, MtrB, MtrC, MtrD, MtrE, MtrF, MtrG and MtrH. Requires 5-hydroxybenzimidazolylcob(I)amide as cofactor.

Its subcellular location is the cell membrane. It catalyses the reaction 5-methyl-5,6,7,8-tetrahydromethanopterin + coenzyme M + 2 Na(+)(in) = 5,6,7,8-tetrahydromethanopterin + methyl-coenzyme M + 2 Na(+)(out). It participates in one-carbon metabolism; methanogenesis from CO(2); methyl-coenzyme M from 5,10-methylene-5,6,7,8-tetrahydromethanopterin: step 2/2. Functionally, part of a complex that catalyzes the formation of methyl-coenzyme M and tetrahydromethanopterin from coenzyme M and methyl-tetrahydromethanopterin. This is an energy-conserving, sodium-ion translocating step. This is Tetrahydromethanopterin S-methyltransferase subunit A from Methanohalobium evestigatum (strain ATCC BAA-1072 / DSM 3721 / NBRC 107634 / OCM 161 / Z-7303).